We begin with the raw amino-acid sequence, 546 residues long: NAD(P)H-quinone oxidoreductase chain 4 (546 aa).

Helical transmembrane passes span phenylalanine 24–phenylalanine 44, phenylalanine 56–phenylalanine 76, methionine 108–valine 128, proline 132–valine 152, leucine 156–tryptophan 176, phenylalanine 188–phenylalanine 208, isoleucine 232–histidine 252, threonine 263–leucine 283, phenylalanine 297–phenylalanine 317, isoleucine 326–serine 346, alanine 352–alanine 372, phenylalanine 396–valine 416, valine 437–methionine 457, and isoleucine 484–valine 504.

It belongs to the complex I subunit 4 family.

The protein localises to the cellular thylakoid membrane. It catalyses the reaction a plastoquinone + NADH + (n+1) H(+)(in) = a plastoquinol + NAD(+) + n H(+)(out). The catalysed reaction is a plastoquinone + NADPH + (n+1) H(+)(in) = a plastoquinol + NADP(+) + n H(+)(out). Functionally, NDH-1 shuttles electrons from NAD(P)H, via FMN and iron-sulfur (Fe-S) centers, to quinones in the respiratory chain. The immediate electron acceptor for the enzyme in this species is believed to be plastoquinone. Couples the redox reaction to proton translocation (for every two electrons transferred, four hydrogen ions are translocated across the cytoplasmic membrane), and thus conserves the redox energy in a proton gradient. The polypeptide is NAD(P)H-quinone oxidoreductase chain 4 (Prochlorococcus marinus subsp. pastoris (strain CCMP1986 / NIES-2087 / MED4)).